Here is a 112-residue protein sequence, read N- to C-terminus: Signal recognition particle 19 kDa protein (112 aa).

It belongs to the SRP19 family. Part of the signal recognition particle protein translocation system, which is composed of SRP and FtsY. Archaeal SRP consists of a 7S RNA molecule of 300 nucleotides and two protein subunits: SRP54 and SRP19.

Its subcellular location is the cytoplasm. Functionally, involved in targeting and insertion of nascent membrane proteins into the cytoplasmic membrane. Binds directly to 7S RNA and mediates binding of the 54 kDa subunit of the SRP. The sequence is that of Signal recognition particle 19 kDa protein from Aeropyrum pernix (strain ATCC 700893 / DSM 11879 / JCM 9820 / NBRC 100138 / K1).